The primary structure comprises 321 residues: Homoserine O-succinyltransferase (321 aa).

Residue cysteine 142 is the Acyl-thioester intermediate of the active site. Lysine 163 and serine 192 together coordinate substrate. Residue histidine 235 is the Proton acceptor of the active site. The active site involves glutamate 237. Arginine 249 lines the substrate pocket.

The protein belongs to the MetA family.

Its subcellular location is the cytoplasm. The enzyme catalyses L-homoserine + succinyl-CoA = O-succinyl-L-homoserine + CoA. The protein operates within amino-acid biosynthesis; L-methionine biosynthesis via de novo pathway; O-succinyl-L-homoserine from L-homoserine: step 1/1. In terms of biological role, transfers a succinyl group from succinyl-CoA to L-homoserine, forming succinyl-L-homoserine. The protein is Homoserine O-succinyltransferase of Shewanella loihica (strain ATCC BAA-1088 / PV-4).